Reading from the N-terminus, the 632-residue chain is PWWP domain-containing protein 5 (632 aa).

Residues 97–158 enclose the PWWP domain; sequence DSDLVWAKLR…ASQIKPFHQN (62 aa). Residues 310-452 are disordered; the sequence is RKTDYKDNAE…AERKISSPDE (143 aa). Basic and acidic residues-rich tracts occupy residues 313 to 326, 339 to 364, 371 to 383, and 425 to 449; these read DYKDNAEQTKEKTL, STEKLDGKSHSEKKRKVESSESGKSE, QQKEDSVSKHSNE, and KSTEVENEKTKKPRHQELAERKISS. The Nuclear localization signal motif lies at 352 to 359; the sequence is KRKVESSE.

The protein belongs to the PDP family. As to quaternary structure, component of the PRC2 (polycomb repressive complex 2) complex which regulates histone methylation on histone H3K27.

Its subcellular location is the nucleus. Its function is as follows. May influence gene expression by regulating the function of the PRC2 complex and modulating H3K27me3 level. In Arabidopsis thaliana (Mouse-ear cress), this protein is PWWP domain-containing protein 5.